A 363-amino-acid polypeptide reads, in one-letter code: Type-2 angiotensin II receptor (363 aa).

Topologically, residues 1 to 45 (MKDNFSFAATSRNITSSRPFDNLNATGTNESAFNCSHKPSDKHLE) are extracellular. Asn-4, Asn-13, Asn-24, Asn-29, and Asn-34 each carry an N-linked (GlcNAc...) asparagine glycan. 2 disulfide bridges follow: Cys-35–Cys-290 and Cys-117–Cys-195. The chain crosses the membrane as a helical span at residues 46–70 (AIPVLYYMIFVIGFAVNIVVVSLFC). At 71–80 (CQKGPKKVSS) the chain is on the cytoplasmic side. Residues 81–104 (IYIFNLALADLLLLATLPLWATYY) traverse the membrane as a helical segment. Residues Tyr-103 and Tyr-104 each contribute to the angiotensin II site. Over 105–114 (SYRYDWLFGP) the chain is Extracellular. Residues 115–140 (VMCKVFGSFLTLNMFASIFFITCMSV) form a helical membrane-spanning segment. Residues 141–159 (DRYQSVIYPFLSQRRNPWQ) are Cytoplasmic-facing. The chain crosses the membrane as a helical span at residues 160–181 (ASYVVPLVWCMACLSSLPTFYF). Residues Arg-182, Tyr-204, and Lys-215 each coordinate angiotensin II. Residues 182–206 (RDVRTIEYLGVNACIMAFPPEKYAQ) are Extracellular-facing. A helical transmembrane segment spans residues 207 to 232 (WSAGIALMKNILGFIIPLIFIATCYF). The Cytoplasmic segment spans residues 233-257 (GIRKHLLKTNSYGKNRITRDQVLKM). The helical transmembrane segment at 258–281 (AAAVVLAFIICWLPFHVLTFLDAL) threads the bilayer. Asp-279 is a binding site for angiotensin II. Topologically, residues 282-294 (TWMGIINSCEVIA) are extracellular. A helical membrane pass occupies residues 295–320 (VIDLALPFAILLGFTNSCVNPFLYCF). Angiotensin II is bound at residue Asp-297. At 321-363 (VGNRFQQKLRSVFRVPITWLQGKRETMSCRKGSSLREMDTFVS) the chain is on the cytoplasmic side. Residues 324–333 (RFQQKLRSVF) form a helix VIII region. Residue Ser-354 is modified to Phosphoserine; by PKC.

This sequence belongs to the G-protein coupled receptor 1 family. In terms of assembly, interacts with MTUS1. Expressed at highest levels in adrenal gland and uterus.

It localises to the cell membrane. Its function is as follows. Receptor for angiotensin II, a vasoconstricting peptide. Signals primarily via a non-canonical G-protein- and beta-arrestin independent pathways. Cooperates with MTUS1 to inhibit ERK2 activation and cell proliferation. The sequence is that of Type-2 angiotensin II receptor from Mus musculus (Mouse).